Here is a 149-residue protein sequence, read N- to C-terminus: Large ribosomal subunit protein bL9 (149 aa).

Lys-89 is modified (N6-acetyllysine).

Belongs to the bacterial ribosomal protein bL9 family.

Its function is as follows. Binds to the 23S rRNA. The chain is Large ribosomal subunit protein bL9 from Shigella dysenteriae serotype 1 (strain Sd197).